A 314-amino-acid chain; its full sequence is Melanocyte-stimulating hormone receptor (314 aa).

Residues 1–35 are Extracellular-facing; sequence MSMLAPLRLVREPWNASEGNQSNATAGAGGAWCQG. Residues Asn15, Asn20, and Asn23 are each glycosylated (N-linked (GlcNAc...) asparagine). A helical transmembrane segment spans residues 36-61; that stretch reads LDIPNELFLTLGLVSLVENLLVVAAI. Topologically, residues 62–70 are cytoplasmic; the sequence is LKNRNLHSP. A helical membrane pass occupies residues 71–91; the sequence is TYYFICCLAVSDMLVSVSNLA. Topologically, residues 92 to 116 are extracellular; it reads KTLFMLLMEHGVLVIRASIVRHMDN. The helical transmembrane segment at 117 to 138 threads the bilayer; that stretch reads VIDMLICSSVVSSLSFLGVIAV. The Cytoplasmic segment spans residues 139–161; it reads DRYITIFYALRYHSIMTLQRAVV. Residues 162-181 form a helical membrane-spanning segment; sequence TMASVWLASTVSSTVLITYY. Residues 182-189 are Extracellular-facing; the sequence is RNNAILLC. A helical transmembrane segment spans residues 190–209; the sequence is LIGFFLFMLVLMLVLYIHMF. Residues 210-237 lie on the Cytoplasmic side of the membrane; sequence ALACHHVRSISSQQKQPTIYRTSSLKGA. The helical transmembrane segment at 238 to 263 threads the bilayer; that stretch reads VTLTILLGVFFICWGPFFFHLILIVT. Topologically, residues 264-276 are extracellular; that stretch reads CPTNPFCTCFFSY. Residues 277-297 form a helical membrane-spanning segment; the sequence is FNLFLILIICNSVVDPLIYAF. Residues 298–314 are Cytoplasmic-facing; the sequence is RSQELRRTLREVVLCSW. Residue Cys312 is the site of S-palmitoyl cysteine attachment.

This sequence belongs to the G-protein coupled receptor 1 family.

It localises to the cell membrane. Functionally, receptor for MSH (alpha, beta and gamma) and ACTH. The activity of this receptor is mediated by G proteins which activate adenylate cyclase. Mediates melanogenesis via regulation of cAMP signaling in melanocytes. The polypeptide is Melanocyte-stimulating hormone receptor (MC1R) (Gallus gallus (Chicken)).